The primary structure comprises 88 residues: Phosphocarrier protein HPr (88 aa).

Positions 1–88 (MASKEFHIVA…ETMTKEGLAE (88 aa)) constitute an HPr domain. Histidine 15 acts as the Pros-phosphohistidine intermediate in catalysis. Serine 46 carries the phosphoserine; by HPrK/P modification.

This sequence belongs to the HPr family.

Its subcellular location is the cytoplasm. Its activity is regulated as follows. Phosphorylation on Ser-46 inhibits the phosphoryl transfer from enzyme I to HPr. General (non sugar-specific) component of the phosphoenolpyruvate-dependent sugar phosphotransferase system (sugar PTS). This major carbohydrate active-transport system catalyzes the phosphorylation of incoming sugar substrates concomitantly with their translocation across the cell membrane. The phosphoryl group from phosphoenolpyruvate (PEP) is transferred to the phosphoryl carrier protein HPr by enzyme I. Phospho-HPr then transfers it to the PTS EIIA domain. In terms of biological role, P-Ser-HPr interacts with the catabolite control protein A (CcpA), forming a complex that binds to DNA at the catabolite response elements cre, operator sites preceding a large number of catabolite-regulated genes. Thus, P-Ser-HPr is a corepressor in carbon catabolite repression (CCR), a mechanism that allows bacteria to coordinate and optimize the utilization of available carbon sources. P-Ser-HPr also plays a role in inducer exclusion, in which it probably interacts with several non-PTS permeases and inhibits their transport activity. This Lactococcus lactis subsp. cremoris (Streptococcus cremoris) protein is Phosphocarrier protein HPr (ptsH).